The following is an 87-amino-acid chain: U3-theraphotoxin-Hhn1g (87 aa).

An N-terminal signal peptide occupies residues 1 to 24 (MVNMKASMFLTFAGLVLLFVVCFA). A propeptide spanning residues 25–52 (SESEEKEFPKEMLSSIFAVDNDFKQEER) is cleaved from the precursor. 3 disulfides stabilise this stretch: Cys54/Cys67, Cys61/Cys72, and Cys66/Cys79.

Belongs to the neurotoxin 10 (Hwtx-1) family. 51 (Hntx-8) subfamily. Hntx-8 sub-subfamily. Expressed by the venom gland.

The protein resides in the secreted. Its function is as follows. Ion channel inhibitor. This chain is U3-theraphotoxin-Hhn1g, found in Cyriopagopus hainanus (Chinese bird spider).